Consider the following 305-residue polypeptide: Sulfate adenylyltransferase subunit 2 (305 aa).

The protein belongs to the PAPS reductase family. CysD subfamily. As to quaternary structure, heterodimer composed of CysD, the smaller subunit, and CysN.

It carries out the reaction sulfate + ATP + H(+) = adenosine 5'-phosphosulfate + diphosphate. Its pathway is sulfur metabolism; hydrogen sulfide biosynthesis; sulfite from sulfate: step 1/3. With CysN forms the ATP sulfurylase (ATPS) that catalyzes the adenylation of sulfate producing adenosine 5'-phosphosulfate (APS) and diphosphate, the first enzymatic step in sulfur assimilation pathway. APS synthesis involves the formation of a high-energy phosphoric-sulfuric acid anhydride bond driven by GTP hydrolysis by CysN coupled to ATP hydrolysis by CysD. The chain is Sulfate adenylyltransferase subunit 2 from Pseudomonas putida (strain ATCC 700007 / DSM 6899 / JCM 31910 / BCRC 17059 / LMG 24140 / F1).